A 606-amino-acid polypeptide reads, in one-letter code: NADH-ubiquinone oxidoreductase chain 5 (606 aa).

The next 14 helical transmembrane spans lie at 1-21, 43-63, 87-107, 117-137, 140-160, 171-191, 241-261, 273-293, 310-330, 365-385, 409-429, 457-477, 488-508, and 582-602; these read MNMF…PIIM, AFMI…ETII, MIFV…SMWY, FFKY…ANNM, LFIG…WWYG, AVLY…WFLL, TPVS…FLLI, IQTL…ICAL, LGLM…LHIC, VLPF…GMPF, LLIT…IMFF, LLIG…PTTI, MTAL…NLTT, and GLIK…LLIL.

It belongs to the complex I subunit 5 family. Core subunit of respiratory chain NADH dehydrogenase (Complex I) which is composed of 45 different subunits.

The protein resides in the mitochondrion inner membrane. The catalysed reaction is a ubiquinone + NADH + 5 H(+)(in) = a ubiquinol + NAD(+) + 4 H(+)(out). In terms of biological role, core subunit of the mitochondrial membrane respiratory chain NADH dehydrogenase (Complex I) which catalyzes electron transfer from NADH through the respiratory chain, using ubiquinone as an electron acceptor. Essential for the catalytic activity and assembly of complex I. The chain is NADH-ubiquinone oxidoreductase chain 5 (MT-ND5) from Canis lupus (Gray wolf).